The primary structure comprises 1091 residues: Integrin alpha-6 (1091 aa).

A signal peptide spans 1–23; sequence MAVAGQLCLLYLSAGLLARLGTA. Residues 24–1011 are Extracellular-facing; it reads FNLDTREDNV…FPSKTVAQYS (988 aa). 7 FG-GAP repeats span residues 30 to 95, 101 to 166, 176 to 229, 244 to 300, 301 to 363, 364 to 419, and 420 to 479; these read EDNV…GPCT, NDAD…IEDD, DGRL…FFDM, DHDE…KSAH, LLPE…KWSN, VKPI…GIIT, and KPTQ…VTPN. An N-linked (GlcNAc...) asparagine glycan is attached at asparagine 78. 3 cysteine pairs are disulfide-bonded: cysteine 86/cysteine 94, cysteine 131/cysteine 154, and cysteine 175/cysteine 188. 2 N-linked (GlcNAc...) asparagine glycosylation sites follow: asparagine 223 and asparagine 284. Ca(2+)-binding residues include aspartate 324, asparagine 326, aspartate 328, and aspartate 332. N-linked (GlcNAc...) asparagine glycosylation occurs at asparagine 370. Residues aspartate 386, asparagine 388, aspartate 390, tyrosine 392, aspartate 394, aspartate 441, aspartate 443, asparagine 445, tyrosine 447, and aspartate 449 each coordinate Ca(2+). Intrachain disulfides connect cysteine 489/cysteine 496, cysteine 502/cysteine 562, cysteine 626/cysteine 632, and cysteine 726/cysteine 737. Residues asparagine 731, asparagine 746, and asparagine 927 are each glycosylated (N-linked (GlcNAc...) asparagine). Disulfide bonds link cysteine 881/cysteine 928 and cysteine 934/cysteine 939. Asparagine 958 carries N-linked (GlcNAc...) asparagine glycosylation. The helical transmembrane segment at 1012-1037 threads the bilayer; it reads GVAWWIILLAVLAGILMLALLVFLLW. Topologically, residues 1038–1091 are cytoplasmic; sequence KCGFFKRSRYDDSIPRYHAVRIRKEEREIKDEKHMDNLEKKQWITKWNENESYS. The S-palmitoyl cysteine; by DHHC3 moiety is linked to residue cysteine 1039. The GFFKR motif motif lies at 1040–1044; sequence GFFKR. Residue arginine 1064 is modified to Phosphoserine.

Belongs to the integrin alpha chain family. In terms of assembly, heterodimer of an alpha and a beta subunit. The alpha subunit is composed of a heavy and a light chain linked by a disulfide bond. Alpha-6 associates with either beta-1 (ITGB1) or beta-4 (ITGB4) to form ITGA6:ITGB1 and ITGA6:ITGB4, respectively. ITGA6:ITGB1 is found in a complex with CD9; interaction takes place in oocytes and is involved in sperm-egg fusion. ITGA6:ITGB4 is found in a ternary complex with NRG1 and ERBB3. ITGA6:ITGB4 is found in a ternary complex with IGF1 and IGF1R. ITGA6:ITGB4 interacts with IGF2. Interacts with ADAM9. Interacts with RAB21. Interacts with MDK. ITGA6:ITGB1 interacts with MDK; this interaction mediates MDK-induced neurite outgrowth. Interacts with CD82; this interaction down-regulates ITGA6-mediated cell adhesion. In terms of processing, isoforms containing segment A, but not segment B, are the major targets for PMA-induced phosphorylation. Phosphorylation occurs on 'Ser-1064' of isoform alpha-6X1A. Phosphorylation is not required for the induction of integrin alpha-6A/beta-1 high affinity but may reduce the affinity for ligand. Post-translationally, undergoes PLAU-mediated cleavage at residues Arg-595-596-Arg in a time-dependent manner to produce processed integrin alpha-6 (alpha6p). Palmitoylation by DHHC3 enhances stability and cell surface expression. Expressed at low levels in normal skin tissue with elevated levels in skin tumors.

Its subcellular location is the cell membrane. Its function is as follows. Integrin alpha-6/beta-1 (ITGA6:ITGB1) is a receptor for laminin on platelets. Integrin alpha-6/beta-1 (ITGA6:ITGB1) is present in oocytes and is involved in sperm-egg fusion. Integrin alpha-6/beta-4 (ITGA6:ITGB4) is a receptor for laminin in epithelial cells and it plays a critical structural role in the hemidesmosome. ITGA6:ITGB4 binds to NRG1 (via EGF domain) and this binding is essential for NRG1-ERBB signaling. ITGA6:ITGB4 binds to IGF1 and this binding is essential for IGF1 signaling. ITGA6:ITGB4 binds to IGF2 and this binding is essential for IGF2 signaling. This chain is Integrin alpha-6 (Itga6), found in Mus musculus (Mouse).